The following is a 744-amino-acid chain: Adenosylcobalamin-dependent ribonucleoside-triphosphate reductase (744 aa).

A disulfide bridge connects residues C120 and C424. The interval 148 to 159 (SMPFSFLFDQLM) is effector region-1. Residues 169–318 (VNSNIKQIPK…ICNLIGKTVV (150 aa)) are effector region-2. Residues C413 and E415 contribute to the active site. Residues 570-631 (FHYAGYLIQR…SKNFASAGTV (62 aa)) are adenosylcobalamin-binding-1. Positions 690-729 (LKQAPKEPINKKTYEERAALITDDVEEVFTKQNDDQKGLE) are adenosylcobalamin-binding-2.

It belongs to the class II ribonucleoside-triphosphate reductase family. In terms of assembly, monomer. Adenosylcob(III)alamin serves as cofactor.

The enzyme catalyses a 2'-deoxyribonucleoside 5'-triphosphate + [thioredoxin]-disulfide + H2O = a ribonucleoside 5'-triphosphate + [thioredoxin]-dithiol. With respect to regulation, allosterically regulated by ATP and dNTP. In Lactobacillus acidophilus (strain ATCC 700396 / NCK56 / N2 / NCFM), this protein is Adenosylcobalamin-dependent ribonucleoside-triphosphate reductase (rtpR).